The sequence spans 146 residues: Small ribosomal subunit protein bS6 (146 aa).

Positions 100 to 146 (QSAMMRKRDDDDRGDRPDRGDRGRGPRPDRPPRRPRDDAAASDEGGF) are disordered. A compositionally biased stretch (basic and acidic residues) spans 105-138 (RKRDDDDRGDRPDRGDRGRGPRPDRPPRRPRDDA).

The protein belongs to the bacterial ribosomal protein bS6 family.

In terms of biological role, binds together with bS18 to 16S ribosomal RNA. This is Small ribosomal subunit protein bS6 from Methylocella silvestris (strain DSM 15510 / CIP 108128 / LMG 27833 / NCIMB 13906 / BL2).